A 120-amino-acid chain; its full sequence is Small ribosomal subunit protein uS13 (120 aa).

Residues 93–120 form a disordered region; sequence GLPVRGQNTKNNARTRKGPRRTVANKKK. Basic residues predominate over residues 105–120; it reads ARTRKGPRRTVANKKK.

Belongs to the universal ribosomal protein uS13 family. In terms of assembly, part of the 30S ribosomal subunit. Has been shown to cross-link to S19 forming a loose heterodimer. Forms two bridges to the 50S subunit in the 70S ribosome.

Functionally, located at the top of the head of the 30S subunit, it contacts several helices of the 16S rRNA. In the 70S ribosome it contacts the 23S rRNA (bridge B1a) and protein L5 of the 50S subunit (bridge B1b), connecting the 2 subunits; these bridges are implicated in subunit movement. Contacts the tRNA in the A and P-sites. This Geobacillus stearothermophilus (Bacillus stearothermophilus) protein is Small ribosomal subunit protein uS13 (rpsM).